A 289-amino-acid chain; its full sequence is 26S proteasome non-ATPase regulatory subunit 8 (289 aa).

The residue at position 45 (Ser45) is a Phosphoserine. The 170-residue stretch at 101–270 (PSFERYMAQL…QQKPEDTTIP (170 aa)) folds into the PCI domain. Lys236 participates in a covalent cross-link: Glycyl lysine isopeptide (Lys-Gly) (interchain with G-Cter in SUMO2).

Belongs to the proteasome subunit S14 family. In terms of assembly, component of the 19S proteasome regulatory particle complex. The 26S proteasome consists of a 20S core particle (CP) and two 19S regulatory subunits (RP). The regulatory particle is made of a lid composed of 9 subunits including PSMD8, a base containing 6 ATPases and few additional components. Interacts with DDI2. Interacts with TASOR.

Component of the 26S proteasome, a multiprotein complex involved in the ATP-dependent degradation of ubiquitinated proteins. This complex plays a key role in the maintenance of protein homeostasis by removing misfolded or damaged proteins, which could impair cellular functions, and by removing proteins whose functions are no longer required. Therefore, the proteasome participates in numerous cellular processes, including cell cycle progression, apoptosis, or DNA damage repair. The protein is 26S proteasome non-ATPase regulatory subunit 8 (PSMD8) of Pongo abelii (Sumatran orangutan).